Consider the following 362-residue polypeptide: S-adenosylmethionine decarboxylase proenzyme 2 (362 aa).

Catalysis depends on residues E9 and E12. E68 is a binding site for substrate. S69 serves as the catalytic Schiff-base intermediate with substrate; via pyruvic acid. S69 bears the Pyruvic acid (Ser); by autocatalysis mark. C83 acts as the Proton donor; for catalytic activity in catalysis. Catalysis depends on proton acceptor; for processing activity residues S232 and H245. Position 249 (E249) interacts with substrate.

This sequence belongs to the eukaryotic AdoMetDC family. Requires pyruvate as cofactor. In terms of processing, is synthesized initially as an inactive proenzyme. Formation of the active enzyme involves a self-maturation process in which the active site pyruvoyl group is generated from an internal serine residue via an autocatalytic post-translational modification. Two non-identical subunits are generated from the proenzyme in this reaction, and the pyruvate is formed at the N-terminus of the alpha chain, which is derived from the carboxyl end of the proenzyme. The post-translation cleavage follows an unusual pathway, termed non-hydrolytic serinolysis, in which the side chain hydroxyl group of the serine supplies its oxygen atom to form the C-terminus of the beta chain, while the remainder of the serine residue undergoes an oxidative deamination to produce ammonia and the pyruvoyl group blocking the N-terminus of the alpha chain.

The catalysed reaction is S-adenosyl-L-methionine + H(+) = S-adenosyl 3-(methylsulfanyl)propylamine + CO2. The protein operates within amine and polyamine biosynthesis; S-adenosylmethioninamine biosynthesis; S-adenosylmethioninamine from S-adenosyl-L-methionine: step 1/1. Functionally, essential for biosynthesis of the polyamines spermidine and spermine. Essential for polyamine homeostasis, and normal plant embryogenesis, growth and development. The sequence is that of S-adenosylmethionine decarboxylase proenzyme 2 from Arabidopsis thaliana (Mouse-ear cress).